We begin with the raw amino-acid sequence, 417 residues long: PRKCA-binding protein (417 aa).

Positions 22–105 constitute a PDZ domain; that stretch reads KVTLQKDAQN…EVTIHYNKLQ (84 aa). C44 and C46 together coordinate Zn(2+). A Phosphothreonine modification is found at T82. The region spanning 144-357 is the AH domain; it reads LCNDGLVKRL…CYSVLRDADV (214 aa). Residues 375–417 are disordered; that stretch reads QDEFTDGEDEEDEDEEDTAAGEPPRDSRGAAGPLDKGGSWCNS. Residues 377-393 show a composition bias toward acidic residues; it reads EFTDGEDEEDEDEEDTA. C415 carries S-palmitoyl cysteine; by DHHC8 lipidation.

Monomer and homodimer. Interacts with CXADR. Interacts presynaptically with the glutamate receptors GRIA2, GRIA3, GRIK3, isoform 3 of GRIA4, isoform A of GRM4, GRM7 and GRM8; with NAPA and NAPB; and with BTG2. The interaction with NAPA and NAPB disrupts the interaction with GRIA2, conducting to the internalization of GRIA2. Interacts with PRKCA; with the amine transporters SLC6A2 and SLC6A3; with the channels ASIC1 and ASIC2; with the GTP-binding proteins ARF1 and ARF3; with the ephrin receptor tyrosine kinases EPHA7, EPHB1 and EPHB2; with ERBB2 and through its PDZ domain with the C-terminal tail of PRLHR. Interacts with UNC5A. Interacts (via AH domain) with NCS1/FREQ; in a calcium-dependent manner. Interacts with F-actin and associates with the ARP2/3 complex. Interacts (via PDZ domain) with ARF1 (activated); the interaction blocks Arp2/3 complex inhibition. Interacts with SORCS3. Phosphorylation at Thr-82 appears to inhibit the interaction with AMPA receptors. Post-translationally, palmitoylation on Cys-415 is essential for long-term synaptic depression (LTD).

The protein resides in the cytoplasm. It is found in the perinuclear region. Its subcellular location is the membrane. The protein localises to the postsynaptic density. It localises to the synapse. The protein resides in the synaptosome. It is found in the cytoskeleton. In terms of biological role, probable adapter protein that bind to and organize the subcellular localization of a variety of membrane proteins containing some PDZ recognition sequence. Involved in the clustering of various receptors, possibly by acting at the receptor internalization level. Plays a role in synaptic plasticity by regulating the trafficking and internalization of AMPA receptors. May be regulated upon PRKCA activation. May regulate ASIC1/ASIC3 channel. Regulates actin polymerization by inhibiting the actin-nucleating activity of the Arp2/3 complex; the function is competitive with nucleation promoting factors and is linked to neuronal morphology regulation and AMPA receptor (AMPAR) endocytosis. Via interaction with the Arp2/3 complex involved in regulation of synaptic plasicity of excitatory synapses and required for spine shrinkage during long-term depression (LTD). Involved in regulation of astrocyte morphology, antagonistic to Arp2/3 complex activator WASL/N-WASP function. In Bos taurus (Bovine), this protein is PRKCA-binding protein (PICK1).